Consider the following 304-residue polypeptide: Nod factor export ATP-binding protein I (304 aa).

Positions 6-236 constitute an ABC transporter domain; that stretch reads IDFQQVEKRY…EIGCDVIEIY (231 aa). An ATP-binding site is contributed by 38-45; the sequence is GPNGAGKT.

Belongs to the ABC transporter superfamily. Lipooligosaccharide exporter (TC 3.A.1.102) family. In terms of assembly, the complex is composed of two ATP-binding proteins (NodI) and two transmembrane proteins (NodJ).

The protein resides in the cell inner membrane. Part of the ABC transporter complex NodIJ involved in the export of the nodulation factors (Nod factors), the bacterial signal molecules that induce symbiosis and subsequent nodulation induction. Nod factors are LCO (lipo-chitin oligosaccharide), a modified beta-1,4-linked N-acetylglucosamine oligosaccharide. This subunit is responsible for energy coupling to the transport system. The polypeptide is Nod factor export ATP-binding protein I (Burkholderia pseudomallei (strain K96243)).